We begin with the raw amino-acid sequence, 395 residues long: MNQMWRTHLQSKVEQLKEQGQYRNLHVTEKAEETWLIRNEKRMLNLASNNYLGLAGDERLKEAAIACTRKYGTGATASRLVVGNYPLYEEVERSICDWKGTERALIVNSGYTANVGAISALACRHDMIFSDKLNHASIVDGIILSGAEHKRYRHNDLDHLEKMLQIASPEKRKLIVTDTVFSMDGDIAYLRGLVQLKEKYGAIIIVDEAHASGIYGIGGAGLSHVEKDIAQKIDIHMGTFSKALGCYGAYLTGDSIYIEYLQNMMRSLIFTTALPPGTLGAIRKAIEIVKEDNERRERLIENGAYFRTHLQEAGFDIGNSSTHIVPIVVGSNENTLRFSERLQEVGIAAIAIRPPTVPVGSSRVRFAVTSQHTIADLKWAIQHIIRIGKEEGFLV.

Arg23 lines the substrate pocket. Residue Gly110–Tyr111 participates in pyridoxal 5'-phosphate binding. Position 135 (His135) interacts with substrate. Pyridoxal 5'-phosphate-binding positions include Ser182, Asp207 to His210, and Thr239 to Lys242. Position 242 is an N6-(pyridoxal phosphate)lysine (Lys242). Substrate is bound at residue Thr356.

The protein belongs to the class-II pyridoxal-phosphate-dependent aminotransferase family. BioF subfamily. In terms of assembly, homodimer. It depends on pyridoxal 5'-phosphate as a cofactor.

The catalysed reaction is 6-carboxyhexanoyl-[ACP] + L-alanine + H(+) = (8S)-8-amino-7-oxononanoate + holo-[ACP] + CO2. It participates in cofactor biosynthesis; biotin biosynthesis. Its function is as follows. Catalyzes the decarboxylative condensation of pimeloyl-[acyl-carrier protein] and L-alanine to produce 8-amino-7-oxononanoate (AON), [acyl-carrier protein], and carbon dioxide. The sequence is that of Putative 8-amino-7-oxononanoate synthase (bioF) from Bacillus mycoides (strain KBAB4) (Bacillus weihenstephanensis).